The following is a 470-amino-acid chain: Poly(A) polymerase catalytic subunit (470 aa).

Residues D192 and D194 contribute to the active site.

The protein belongs to the poxviridae poly(A) polymerase catalytic subunit family. Heterodimer of a large (catalytic) subunit and a small (regulatory) subunit.

It carries out the reaction RNA(n) + ATP = RNA(n)-3'-adenine ribonucleotide + diphosphate. Its function is as follows. Polymerase that creates the 3'-poly(A) tail of mRNA's. This is Poly(A) polymerase catalytic subunit (PAPL) from Deerpox virus (strain Mule deer/United States/W-848-83/1983) (DPV).